Consider the following 183-residue polypeptide: MTKQPEDWLDDVPGDDIEDEDDEIIWVSKSEIKRDAEELKRLGAEIVDLGKNALDKIPLDADLRAAIELAQRIKMEGRRRQLQLIGKMLRQRDVEPIRQALDKLKNRHNQQVVLFHKLENLRDRLIEQGDDAIAEVLNLWPDADRQQLRTLIRNAKKEKEGNKPPKSARQIFQYLRELAENEG.

It belongs to the DarP family.

The protein resides in the cytoplasm. Its function is as follows. Member of a network of 50S ribosomal subunit biogenesis factors which assembles along the 30S-50S interface, preventing incorrect 23S rRNA structures from forming. Promotes peptidyl transferase center (PTC) maturation. The polypeptide is Dual-action ribosomal maturation protein DarP (Escherichia coli O6:H1 (strain CFT073 / ATCC 700928 / UPEC)).